The sequence spans 328 residues: DNA-directed RNA polymerase subunit alpha (328 aa).

The segment at 1–231 is alpha N-terminal domain (alpha-NTD); it reads MIYQMQMPAK…EHVTFFADFS (231 aa). The tract at residues 252 to 328 is alpha C-terminal domain (alpha-CTD); sequence MRKLFNTKIE…MDITKYQMKG (77 aa).

The protein belongs to the RNA polymerase alpha chain family. In terms of assembly, homodimer. The RNAP catalytic core consists of 2 alpha, 1 beta, 1 beta' and 1 omega subunit. When a sigma factor is associated with the core the holoenzyme is formed, which can initiate transcription.

It catalyses the reaction RNA(n) + a ribonucleoside 5'-triphosphate = RNA(n+1) + diphosphate. DNA-dependent RNA polymerase catalyzes the transcription of DNA into RNA using the four ribonucleoside triphosphates as substrates. This is DNA-directed RNA polymerase subunit alpha from Chlorobium limicola (strain DSM 245 / NBRC 103803 / 6330).